The following is a 220-amino-acid chain: Large ribosomal subunit protein uL3 (220 aa).

Positions 132–153 are disordered; that stretch reads SGRASHGNSRSHNVPGSIGMAQ. The segment covering 133-145 has biased composition (polar residues); sequence GRASHGNSRSHNV. At Gln-153 the chain carries N5-methylglutamine.

It belongs to the universal ribosomal protein uL3 family. Part of the 50S ribosomal subunit. Forms a cluster with proteins L14 and L19. Post-translationally, methylated by PrmB.

Its function is as follows. One of the primary rRNA binding proteins, it binds directly near the 3'-end of the 23S rRNA, where it nucleates assembly of the 50S subunit. This is Large ribosomal subunit protein uL3 from Ralstonia nicotianae (strain ATCC BAA-1114 / GMI1000) (Ralstonia solanacearum).